A 101-amino-acid chain; its full sequence is MAKTSMKAREVKRAQLVAKYAEKRAALKAIIVSPASSDEDRWDAVLKLQALPRDSSASRKRNRCNQTGRPHGFLRKFGLSRIKLREATMRGEVPGLRKASW.

This sequence belongs to the universal ribosomal protein uS14 family. In terms of assembly, part of the 30S ribosomal subunit. Contacts proteins S3 and S10.

Functionally, binds 16S rRNA, required for the assembly of 30S particles and may also be responsible for determining the conformation of the 16S rRNA at the A site. This Shewanella putrefaciens (strain CN-32 / ATCC BAA-453) protein is Small ribosomal subunit protein uS14.